Reading from the N-terminus, the 469-residue chain is RuvB-like helicase 2 (469 aa).

Glycine 76–threonine 83 is an ATP binding site.

It belongs to the RuvB family. As to quaternary structure, may form heterododecamers with RVB1. Component of the SWR1 chromatin remodeling complex, the INO80 chromatin remodeling complex, and of the R2TP complex.

The protein localises to the nucleus. It catalyses the reaction ATP + H2O = ADP + phosphate + H(+). In terms of biological role, DNA helicase which participates in several chromatin remodeling complexes, including the SWR1 and the INO80 complexes. The SWR1 complex mediates the ATP-dependent exchange of histone H2A for the H2A variant HZT1 leading to transcriptional regulation of selected genes by chromatin remodeling. The INO80 complex remodels chromatin by shifting nucleosomes and is involved in DNA repair. Also involved in pre-rRNA processing. This is RuvB-like helicase 2 (rvb2) from Aspergillus fumigatus (strain ATCC MYA-4609 / CBS 101355 / FGSC A1100 / Af293) (Neosartorya fumigata).